Reading from the N-terminus, the 153-residue chain is Small ribosomal subunit protein uS13 (153 aa).

Belongs to the universal ribosomal protein uS13 family. As to quaternary structure, part of the 30S ribosomal subunit. Forms a loose heterodimer with protein S19. Forms two bridges to the 50S subunit in the 70S ribosome.

Located at the top of the head of the 30S subunit, it contacts several helices of the 16S rRNA. In the 70S ribosome it contacts the 23S rRNA (bridge B1a) and protein L5 of the 50S subunit (bridge B1b), connecting the 2 subunits; these bridges are implicated in subunit movement. The protein is Small ribosomal subunit protein uS13 of Pyrobaculum islandicum (strain DSM 4184 / JCM 9189 / GEO3).